A 316-amino-acid polypeptide reads, in one-letter code: Apolipoprotein E (316 aa).

Residues 1–18 (MKVLWVALVVALLAGCQA) form the signal peptide. A run of 8 repeats spans residues 79 to 100 (VLME…GQLA), 101 to 122 (PMAQ…ARLG), 123 to 144 (SDME…AMLG), 145 to 166 (QSTE…KRLL), 167 to 188 (RDAD…EGAE), 189 to 210 (RSVS…SRAA), 211 to 232 (TLST…QKLH), and 233 to 254 (GRLE…QQLE). The 8 X 22 AA approximate tandem repeats stretch occupies residues 79 to 254 (VLMEETMKEV…RLDKMRQQLE (176 aa)). At Met-142 the chain carries Methionine sulfoxide. Ser-146 carries the post-translational modification Phosphoserine. The segment at 157 to 167 (HLRKLRKRLLR) is LDL and other lipoprotein receptors binding. 161-164 (LRKR) is a heparin binding site. The lipid-binding and lipoprotein association stretch occupies residues 209–289 (AATLSTQVGQ…SWFEPLVEDM (81 aa)). 228–235 (RQKLHGRL) is a heparin binding site. The segment at 265 to 316 (SQIRLQAEAFQARLRSWFEPLVEDMQRQWAGLVEKVQLALHLSPTSPPSENH) is homooligomerization. The segment at 277–289 (RLRSWFEPLVEDM) is specificity for association with VLDL.

This sequence belongs to the apolipoprotein A1/A4/E family. As to quaternary structure, homotetramer. May interact with ABCA1; functionally associated with ABCA1 in the biogenesis of HDLs. May interact with APP/A4 amyloid-beta peptide; the interaction is extremely stable in vitro but its physiological significance is unclear. May interact with MAPT. May interact with MAP2. In the cerebrospinal fluid, interacts with secreted SORL1. Interacts with PMEL; this allows the loading of PMEL luminal fragment on ILVs to induce fibril nucleation. Post-translationally, APOE exists as multiple glycosylated and sialylated glycoforms within cells and in plasma. The extent of glycosylation and sialylation are tissue and context specific. In terms of processing, glycated in plasma VLDL. Phosphorylated by FAM20C in the extracellular medium.

It is found in the secreted. Its subcellular location is the extracellular space. The protein localises to the extracellular matrix. It localises to the extracellular vesicle. The protein resides in the endosome. It is found in the multivesicular body. APOE is an apolipoprotein, a protein associating with lipid particles, that mainly functions in lipoprotein-mediated lipid transport between organs via the plasma and interstitial fluids. APOE is a core component of plasma lipoproteins and is involved in their production, conversion and clearance. Apolipoproteins are amphipathic molecules that interact both with lipids of the lipoprotein particle core and the aqueous environment of the plasma. As such, APOE associates with chylomicrons, chylomicron remnants, very low density lipoproteins (VLDL) and intermediate density lipoproteins (IDL) but shows a preferential binding to high-density lipoproteins (HDL). It also binds a wide range of cellular receptors including the LDL receptor/LDLR and the very low-density lipoprotein receptor/VLDLR that mediate the cellular uptake of the APOE-containing lipoprotein particles. Finally, APOE also has a heparin-binding activity and binds heparan-sulfate proteoglycans on the surface of cells, a property that supports the capture and the receptor-mediated uptake of APOE-containing lipoproteins by cells. The chain is Apolipoprotein E (APOE) from Ovis aries (Sheep).